The chain runs to 274 residues: 2,3,4,5-tetrahydropyridine-2,6-dicarboxylate N-succinyltransferase (274 aa).

The substrate site is built by Arg104 and Asp141.

The protein belongs to the transferase hexapeptide repeat family. In terms of assembly, homotrimer.

The protein resides in the cytoplasm. It catalyses the reaction (S)-2,3,4,5-tetrahydrodipicolinate + succinyl-CoA + H2O = (S)-2-succinylamino-6-oxoheptanedioate + CoA. The protein operates within amino-acid biosynthesis; L-lysine biosynthesis via DAP pathway; LL-2,6-diaminopimelate from (S)-tetrahydrodipicolinate (succinylase route): step 1/3. This chain is 2,3,4,5-tetrahydropyridine-2,6-dicarboxylate N-succinyltransferase (dapD), found in Escherichia coli O157:H7.